A 478-amino-acid chain; its full sequence is Odorant receptor coreceptor (478 aa).

Residues M1–Y43 lie on the Cytoplasmic side of the membrane. Residues C44 to V64 form a helical membrane-spanning segment. The Extracellular segment spans residues E65–T73. Residues A74 to I94 traverse the membrane as a helical segment. The Cytoplasmic segment spans residues R95 to L133. A helical membrane pass occupies residues L134 to F154. Topologically, residues E155 to G190 are extracellular. N167 is a glycosylation site (N-linked (GlcNAc...) asparagine). A helical transmembrane segment spans residues I191 to A211. Residues N212–D349 are Cytoplasmic-facing. The segment at S261–N281 is disordered. Residues A350–A370 form a helical membrane-spanning segment. Residues Y371 to Y382 are Extracellular-facing. A helical transmembrane segment spans residues A383 to F403. Residues G404–T454 lie on the Cytoplasmic side of the membrane. Residues V455–V475 form a helical membrane-spanning segment. The Extracellular segment spans residues Q476 to K478.

This sequence belongs to the insect chemoreceptor superfamily. Heteromeric odorant receptor channel (TC 1.A.69) family. Orco subfamily. Heterodimer with conventional odorant receptors (ORs). As to expression, present in antennae (at protein level).

It localises to the cell membrane. In terms of biological role, odorant coreceptor which complexes with conventional odorant receptors (ORs) to form odorant-sensing units, providing sensitive and prolonged odorant signaling and calcium permeability. Obligate coreceptor of all odorant receptors. Orco is a universal and integral part of the functional odorant receptor, involved in the dendritic localization of other olfactory receptors. Can form functional ion channels in the absence of an odor-binding odorant receptor. Plays a central role in the perception of olfactory stimuli in ants and is essential for ant social organization. Required for pheromone sensing. Also required for the development and maintenance of odorant receptor neurons (ORNs) and of antennal lobe glomeruli. This is Odorant receptor coreceptor from Ooceraea biroi (Clonal raider ant).